We begin with the raw amino-acid sequence, 299 residues long: Spermatocyte protein spe-11 (299 aa).

Residues Met-1–Glu-38 form a disordered region.

As to expression, expressed in mature sperm.

The protein resides in the cytoplasm. Its subcellular location is the perinuclear region. Paternally sperm-supplied factor required for embryogenesis. Plays a role in preventing polyspermy possibly by promoting the formation of a continuous and cohesive eggshell chitin layer. This is Spermatocyte protein spe-11 (spe-11) from Caenorhabditis elegans.